The primary structure comprises 298 residues: Lysozyme-like protein 1 (298 aa).

The N-terminal stretch at 1 to 16 (MLKLAFVTFLFALASA) is a signal peptide. The 219-residue stretch at 59 to 277 (YAYAVDISVP…AAASSKNTDF (219 aa)) folds into the Ch-type lysozyme domain.

This sequence belongs to the glycosyl hydrolase 25 family. In terms of tissue distribution, expressed in intestine, IL2 and IL6 neurons and some neurons in the head ganglia.

It localises to the cytoplasmic vesicle lumen. Involved in resistance to Gram-negative bacterium S.marcescens and to bacterium Gram-positive S.aureus infection. The protein is Lysozyme-like protein 1 of Caenorhabditis elegans.